The primary structure comprises 172 residues: Melanocortin-2 receptor accessory protein (172 aa).

Residues 38-58 (IVIAFWVSLAAFVVLLFLILL) traverse the membrane as a helical segment. Disordered regions lie at residues 105 to 136 (QAQA…LGGF) and 151 to 172 (GPLV…QLQS).

The protein belongs to the MRAP family. In terms of assembly, homodimer and heterodimer. Forms antiparallel homodimers and heterodimers with MRAP2. Interacts with MC1R, MC2R, MC3R, MC4R and MC5R. As to expression, expressed in adrenal cortex, testis, breast, thyroid, lymph node, ovary and fat. Expressed in adipose tissues.

The protein localises to the cell membrane. It localises to the endoplasmic reticulum membrane. In terms of biological role, modulator of melanocortin receptors (MC1R, MC2R, MC3R, MC4R and MC5R). Acts by increasing ligand-sensitivity of melanocortin receptors and enhancing generation of cAMP by the receptors. Required both for MC2R trafficking to the cell surface of adrenal cells and for signaling in response to corticotropin (ACTH). May be involved in the intracellular trafficking pathways in adipocyte cells. The sequence is that of Melanocortin-2 receptor accessory protein (MRAP) from Homo sapiens (Human).